Consider the following 635-residue polypeptide: DNA topoisomerase 4 subunit B (635 aa).

Residues tyrosine 5, asparagine 45, aspartate 72, 113–119 (GLHGVGA), and lysine 340 contribute to the ATP site. The 116-residue stretch at 422–537 (RELFVVEGDS…KGHIYLALPP (116 aa)) folds into the Toprim domain. Mg(2+) contacts are provided by glutamate 428, aspartate 502, and aspartate 504.

Belongs to the type II topoisomerase family. ParE type 2 subfamily. Heterotetramer composed of ParC and ParE. The cofactor is Mg(2+). Requires Mn(2+) as cofactor. It depends on Ca(2+) as a cofactor.

The enzyme catalyses ATP-dependent breakage, passage and rejoining of double-stranded DNA.. Topoisomerase IV is essential for chromosome segregation. It relaxes supercoiled DNA. Performs the decatenation events required during the replication of a circular DNA molecule. The chain is DNA topoisomerase 4 subunit B from Mycoplasma pneumoniae (strain ATCC 29342 / M129 / Subtype 1) (Mycoplasmoides pneumoniae).